A 147-amino-acid chain; its full sequence is DNA-directed RNA polymerase RPB6 homolog (147 aa).

Belongs to the archaeal RpoK/eukaryotic RPB6 RNA polymerase subunit family. As to quaternary structure, part of the viral DNA-directed RNA polymerase that consists of 8 polII-like subunits (RPB1, RPB2, RPB3, RPB5, RPB6, RPB7, RPB9, RPB10), a capping enzyme and a termination factor.

Its subcellular location is the host cytoplasm. It is found in the virion. In terms of biological role, component of the DNA-directed RNA polymerase (RNAP) that catalyzes the transcription in the cytoplasm of viral DNA into RNA using the four ribonucleoside triphosphates as substrates. This chain is DNA-directed RNA polymerase RPB6 homolog, found in Ornithodoros (relapsing fever ticks).